The following is a 469-amino-acid chain: Ribonuclease Y (469 aa).

Residues 6-26 (VTLILVGVIIFLFISLFFYVI) form a helical membrane-spanning segment. The KH domain occupies 149-209 (FSFTIKLENE…IRREKAKRTM (61 aa)). An HD domain is found at 276 to 369 (VLLHCVEAAV…VKVVDKLSAS (94 aa)).

The protein belongs to the RNase Y family.

The protein localises to the cell membrane. In terms of biological role, endoribonuclease that initiates mRNA decay. This is Ribonuclease Y from Malacoplasma penetrans (strain HF-2) (Mycoplasma penetrans).